A 500-amino-acid chain; its full sequence is Na(+)/H(+) antiporter NhaB (500 aa).

12 helical membrane-spanning segments follow: residues 34–54 (LLLATLGPVVTGWVLVIQFIF), 58–78 (MALKCYPLMPGGLLLVEALLL), 96–116 (VILLLMFMVAGIHFMKELLLF), 129–149 (AVLSLLFCVLSAFLSAFLDAL), 150–170 (TVTAVIISAAVGFYAVYHRVA), 205–225 (LLMHGAVGTALGGVCTLVGEP), 241–261 (FFLKVAPVSMPVLAAGLVTCV), 311–331 (ILIVCLGLHIAEVGLIGLMVI), 350–370 (FQDAMPFTALLVVFFAVVAVI), 394–414 (MLYLANGLLSAISDNVFVATI), 450–470 (ATPNGQAAFLFLLTSAIAPLI), and 477–497 (MVWMALPYTVVMGGLGWWAVT).

Belongs to the NhaB Na(+)/H(+) (TC 2.A.34) antiporter family.

It is found in the cell inner membrane. The catalysed reaction is 2 Na(+)(in) + 3 H(+)(out) = 2 Na(+)(out) + 3 H(+)(in). In terms of biological role, na(+)/H(+) antiporter that extrudes sodium in exchange for external protons. The protein is Na(+)/H(+) antiporter NhaB of Pseudomonas entomophila (strain L48).